We begin with the raw amino-acid sequence, 138 residues long: Large ribosomal subunit protein bL17 (138 aa).

The protein belongs to the bacterial ribosomal protein bL17 family. Part of the 50S ribosomal subunit. Contacts protein L32.

The protein is Large ribosomal subunit protein bL17 of Jannaschia sp. (strain CCS1).